A 334-amino-acid chain; its full sequence is Replication factor C small subunit (334 aa).

Position 49 to 56 (49 to 56 (GPPGVGKT)) interacts with ATP.

The protein belongs to the activator 1 small subunits family. RfcS subfamily. As to quaternary structure, heteromultimer composed of small subunits (RfcS) and large subunits (RfcL).

Functionally, part of the RFC clamp loader complex which loads the PCNA sliding clamp onto DNA. This Methanosarcina barkeri (strain Fusaro / DSM 804) protein is Replication factor C small subunit.